Consider the following 285-residue polypeptide: Inositol oxygenase (285 aa).

The tract at residues 1–28 (MKVAADPDPSLVSQRDMEPEAAKDKDSF) is disordered. The span at 15-28 (RDMEPEAAKDKDSF) shows a compositional bias: basic and acidic residues. Substrate is bound at residue R29. Phosphoserine is present on S33. 85–87 (DES) provides a ligand contact to substrate. Positions 98, 123, and 124 each coordinate Fe cation. Substrate is bound by residues K127 and 141 to 142 (GD). 3 residues coordinate Fe cation: H194, H220, and D253. 220 to 221 (HS) serves as a coordination point for substrate.

It belongs to the myo-inositol oxygenase family. Fe cation serves as cofactor.

The protein resides in the cytoplasm. The catalysed reaction is myo-inositol + O2 = D-glucuronate + H2O + H(+). Its pathway is polyol metabolism; myo-inositol degradation into D-glucuronate; D-glucuronate from myo-inositol: step 1/1. The polypeptide is Inositol oxygenase (MIOX) (Bos taurus (Bovine)).